A 311-amino-acid chain; its full sequence is Exosome complex component Rrp4 (311 aa).

One can recognise an S1 motif domain in the interval 63–131; that stretch reads GDVVIGEITD…EVKKVKLGLK (69 aa). The KH domain maps to 139–197; sequence RDGILVYITPTKVPRLIGKRGSMINMVKEKTHCDIVVGQNGVVWIKGEPDMERIAEKVV. The tract at residues 222–311 is disordered; sequence GVEPEIQVEE…EVKDENNSER (90 aa). A compositionally biased stretch (acidic residues) spans 241–300; that stretch reads PESEDFEEASDYSEDVEVSPESEDIEEVSDESEDLEVESEDVEEGTDTPAAEEDDGEAGD. The segment covering 301–311 has biased composition (basic and acidic residues); sequence AEVKDENNSER.

Belongs to the RRP4 family. In terms of assembly, component of the archaeal exosome complex. Forms a trimer of Rrp4 and/or Csl4 subunits. The trimer associates with a hexameric ring-like arrangement composed of 3 Rrp41-Rrp42 heterodimers.

Its subcellular location is the cytoplasm. Its function is as follows. Non-catalytic component of the exosome, which is a complex involved in RNA degradation. Increases the RNA binding and the efficiency of RNA degradation. Confers strong poly(A) specificity to the exosome. The polypeptide is Exosome complex component Rrp4 (Methanothermobacter thermautotrophicus (strain ATCC 29096 / DSM 1053 / JCM 10044 / NBRC 100330 / Delta H) (Methanobacterium thermoautotrophicum)).